We begin with the raw amino-acid sequence, 66 residues long: DNA-directed RNA polymerase subunit Rpo10 (66 aa).

The Zn(2+) site is built by C7, C10, C44, and C45.

Belongs to the archaeal Rpo10/eukaryotic RPB10 RNA polymerase subunit family. As to quaternary structure, part of the RNA polymerase complex. Zn(2+) is required as a cofactor.

Its subcellular location is the cytoplasm. The enzyme catalyses RNA(n) + a ribonucleoside 5'-triphosphate = RNA(n+1) + diphosphate. In terms of biological role, DNA-dependent RNA polymerase (RNAP) catalyzes the transcription of DNA into RNA using the four ribonucleoside triphosphates as substrates. This chain is DNA-directed RNA polymerase subunit Rpo10, found in Pyrobaculum neutrophilum (strain DSM 2338 / JCM 9278 / NBRC 100436 / V24Sta) (Thermoproteus neutrophilus).